Here is a 443-residue protein sequence, read N- to C-terminus: Tubulin beta chain (443 aa).

The GTP site is built by Gln11, Glu69, Ser138, Gly142, Thr143, Gly144, Asn204, and Asn226. Glu69 is a Mg(2+) binding site. A disordered region spans residues Gln424 to Asn443. Acidic residues predominate over residues Thr429–Asn443.

This sequence belongs to the tubulin family. In terms of assembly, dimer of alpha and beta chains. A typical microtubule is a hollow water-filled tube with an outer diameter of 25 nm and an inner diameter of 15 nM. Alpha-beta heterodimers associate head-to-tail to form protofilaments running lengthwise along the microtubule wall with the beta-tubulin subunit facing the microtubule plus end conferring a structural polarity. Microtubules usually have 13 protofilaments but different protofilament numbers can be found in some organisms and specialized cells. Mg(2+) is required as a cofactor. Post-translationally, some glutamate residues at the C-terminus are either polyglutamylated or polyglycylated. These 2 modifications occur exclusively on glutamate residues and result in either polyglutamate or polyglycine chains on the gamma-carboxyl group. Both modifications can coexist on the same protein on adjacent residues, and lowering polyglycylation levels increases polyglutamylation, and reciprocally. The precise function of such modifications is still unclear but they regulate the assembly and dynamics of axonemal microtubules.

It is found in the cytoplasm. Its subcellular location is the cytoskeleton. Functionally, tubulin is the major constituent of microtubules, a cylinder consisting of laterally associated linear protofilaments composed of alpha- and beta-tubulin heterodimers. Microtubules grow by the addition of GTP-tubulin dimers to the microtubule end, where a stabilizing cap forms. Below the cap, tubulin dimers are in GDP-bound state, owing to GTPase activity of alpha-tubulin. The sequence is that of Tubulin beta chain (BTU1) from Tetrahymena thermophila.